Consider the following 251-residue polypeptide: Pyrroloquinoline-quinone synthase (251 aa).

The protein belongs to the PqqC family.

The enzyme catalyses 6-(2-amino-2-carboxyethyl)-7,8-dioxo-1,2,3,4,7,8-hexahydroquinoline-2,4-dicarboxylate + 3 O2 = pyrroloquinoline quinone + 2 H2O2 + 2 H2O + H(+). The protein operates within cofactor biosynthesis; pyrroloquinoline quinone biosynthesis. Its function is as follows. Ring cyclization and eight-electron oxidation of 3a-(2-amino-2-carboxyethyl)-4,5-dioxo-4,5,6,7,8,9-hexahydroquinoline-7,9-dicarboxylic-acid to PQQ. The chain is Pyrroloquinoline-quinone synthase from Pseudomonas syringae pv. tomato (strain ATCC BAA-871 / DC3000).